Reading from the N-terminus, the 375-residue chain is Thiamine-phosphate synthase (375 aa).

Residues 1–127 (MTNAESRTVL…AACIESIRYQ (127 aa)) are unknown. Residues 128-375 (CYATFRELEL…SSDVCPLPND (248 aa)) are thiamine-phosphate synthase. 4-amino-2-methyl-5-(diphosphooxymethyl)pyrimidine is bound by residues 183–185 (QLR) and asparagine 215. Mg(2+)-binding residues include aspartate 216 and glutamate 235. Serine 254 and lysine 283 together coordinate 4-amino-2-methyl-5-(diphosphooxymethyl)pyrimidine. A 2-[(2R,5Z)-2-carboxy-4-methylthiazol-5(2H)-ylidene]ethyl phosphate-binding site is contributed by glycine 315.

Belongs to the thiamine-phosphate synthase family. Mg(2+) serves as cofactor.

The enzyme catalyses 2-[(2R,5Z)-2-carboxy-4-methylthiazol-5(2H)-ylidene]ethyl phosphate + 4-amino-2-methyl-5-(diphosphooxymethyl)pyrimidine + 2 H(+) = thiamine phosphate + CO2 + diphosphate. It catalyses the reaction 2-(2-carboxy-4-methylthiazol-5-yl)ethyl phosphate + 4-amino-2-methyl-5-(diphosphooxymethyl)pyrimidine + 2 H(+) = thiamine phosphate + CO2 + diphosphate. The catalysed reaction is 4-methyl-5-(2-phosphooxyethyl)-thiazole + 4-amino-2-methyl-5-(diphosphooxymethyl)pyrimidine + H(+) = thiamine phosphate + diphosphate. It functions in the pathway cofactor biosynthesis; thiamine diphosphate biosynthesis; thiamine phosphate from 4-amino-2-methyl-5-diphosphomethylpyrimidine and 4-methyl-5-(2-phosphoethyl)-thiazole: step 1/1. Its function is as follows. Condenses 4-methyl-5-(beta-hydroxyethyl)thiazole monophosphate (THZ-P) and 2-methyl-4-amino-5-hydroxymethyl pyrimidine pyrophosphate (HMP-PP) to form thiamine monophosphate (TMP). The protein is Thiamine-phosphate synthase (thiE) of Rhodopirellula baltica (strain DSM 10527 / NCIMB 13988 / SH1).